Here is a 313-residue protein sequence, read N- to C-terminus: Dimethyladenosine transferase (313 aa).

The S-adenosyl-L-methionine site is built by His37, Leu39, Gly64, Glu85, Asp113, and Asn128.

This sequence belongs to the class I-like SAM-binding methyltransferase superfamily. rRNA adenine N(6)-methyltransferase family. As to quaternary structure, part of the small subunit (SSU) processome, composed of more than 70 proteins and the RNA chaperone small nucleolar RNA (snoRNA) U3.

The protein resides in the nucleus. Its subcellular location is the nucleoplasm. It is found in the nucleolus. The catalysed reaction is adenosine(1779)/adenosine(1780) in 18S rRNA + 4 S-adenosyl-L-methionine = N(6)-dimethyladenosine(1779)/N(6)-dimethyladenosine(1780) in 18S rRNA + 4 S-adenosyl-L-homocysteine + 4 H(+). Specifically dimethylates two adjacent adenosines in the loop of a conserved hairpin near the 3'-end of 18S rRNA in the 40S particle. Involved in the pre-rRNA processing steps leading to small-subunit rRNA production independently of its RNA-modifying catalytic activity. Part of the small subunit (SSU) processome, first precursor of the small eukaryotic ribosomal subunit. During the assembly of the SSU processome in the nucleolus, many ribosome biogenesis factors, an RNA chaperone and ribosomal proteins associate with the nascent pre-rRNA and work in concert to generate RNA folding, modifications, rearrangements and cleavage as well as targeted degradation of pre-ribosomal RNA by the RNA exosome. This Mus musculus (Mouse) protein is Dimethyladenosine transferase (Dimt1).